The chain runs to 349 residues: UPF0284 protein MA_3887 (349 aa).

This sequence belongs to the UPF0284 family.

The polypeptide is UPF0284 protein MA_3887 (Methanosarcina acetivorans (strain ATCC 35395 / DSM 2834 / JCM 12185 / C2A)).